The chain runs to 325 residues: tRNA pseudouridine synthase B (325 aa).

The active-site Nucleophile is D49.

The protein belongs to the pseudouridine synthase TruB family. Type 1 subfamily.

It catalyses the reaction uridine(55) in tRNA = pseudouridine(55) in tRNA. Its function is as follows. Responsible for synthesis of pseudouridine from uracil-55 in the psi GC loop of transfer RNAs. This chain is tRNA pseudouridine synthase B, found in Mesorhizobium japonicum (strain LMG 29417 / CECT 9101 / MAFF 303099) (Mesorhizobium loti (strain MAFF 303099)).